The chain runs to 415 residues: Serine hydroxymethyltransferase 1 (415 aa).

(6S)-5,6,7,8-tetrahydrofolate-binding positions include Leu122 and 126–128 (GHL). Residue Lys230 is modified to N6-(pyridoxal phosphate)lysine.

It belongs to the SHMT family. Homodimer. Pyridoxal 5'-phosphate serves as cofactor.

It is found in the cytoplasm. The catalysed reaction is (6R)-5,10-methylene-5,6,7,8-tetrahydrofolate + glycine + H2O = (6S)-5,6,7,8-tetrahydrofolate + L-serine. The protein operates within one-carbon metabolism; tetrahydrofolate interconversion. Its pathway is amino-acid biosynthesis; glycine biosynthesis; glycine from L-serine: step 1/1. In terms of biological role, catalyzes the reversible interconversion of serine and glycine with tetrahydrofolate (THF) serving as the one-carbon carrier. This reaction serves as the major source of one-carbon groups required for the biosynthesis of purines, thymidylate, methionine, and other important biomolecules. Also exhibits THF-independent aldolase activity toward beta-hydroxyamino acids, producing glycine and aldehydes, via a retro-aldol mechanism. The polypeptide is Serine hydroxymethyltransferase 1 (Burkholderia mallei (strain ATCC 23344)).